Consider the following 238-residue polypeptide: 3-deoxy-manno-octulosonate cytidylyltransferase (238 aa).

Belongs to the KdsB family.

It is found in the cytoplasm. It carries out the reaction 3-deoxy-alpha-D-manno-oct-2-ulosonate + CTP = CMP-3-deoxy-beta-D-manno-octulosonate + diphosphate. It participates in nucleotide-sugar biosynthesis; CMP-3-deoxy-D-manno-octulosonate biosynthesis; CMP-3-deoxy-D-manno-octulosonate from 3-deoxy-D-manno-octulosonate and CTP: step 1/1. The protein operates within bacterial outer membrane biogenesis; lipopolysaccharide biosynthesis. Activates KDO (a required 8-carbon sugar) for incorporation into bacterial lipopolysaccharide in Gram-negative bacteria. This chain is 3-deoxy-manno-octulosonate cytidylyltransferase, found in Nitratiruptor sp. (strain SB155-2).